A 320-amino-acid chain; its full sequence is Beta-ketoacyl-[acyl-carrier-protein] synthase III (320 aa).

Catalysis depends on residues C113 and H247. The interval 248 to 252 (QANRR) is ACP-binding. The active site involves N277.

It belongs to the thiolase-like superfamily. FabH family. As to quaternary structure, homodimer.

The protein localises to the cytoplasm. The catalysed reaction is malonyl-[ACP] + acetyl-CoA + H(+) = 3-oxobutanoyl-[ACP] + CO2 + CoA. Its pathway is lipid metabolism; fatty acid biosynthesis. Catalyzes the condensation reaction of fatty acid synthesis by the addition to an acyl acceptor of two carbons from malonyl-ACP. Catalyzes the first condensation reaction which initiates fatty acid synthesis and may therefore play a role in governing the total rate of fatty acid production. Possesses both acetoacetyl-ACP synthase and acetyl transacylase activities. Its substrate specificity determines the biosynthesis of branched-chain and/or straight-chain of fatty acids. The sequence is that of Beta-ketoacyl-[acyl-carrier-protein] synthase III from Acidiphilium cryptum (strain JF-5).